The following is a 618-amino-acid chain: Glutamine--fructose-6-phosphate aminotransferase [isomerizing] (618 aa).

The active-site Nucleophile; for GATase activity is the Cys-2. The 225-residue stretch at 2–226 (CGIVGYAGRN…DFETAVLTPD (225 aa)) folds into the Glutamine amidotransferase type-2 domain. Residues 72–91 (WATHGRPSTENAHPHNSGGN) are disordered. 2 SIS domains span residues 295–434 (NDDE…VRGK) and 467–608 (CAEN…IDKP). The active-site For Fru-6P isomerization activity is the Lys-613.

Homodimer.

The protein resides in the cytoplasm. It catalyses the reaction D-fructose 6-phosphate + L-glutamine = D-glucosamine 6-phosphate + L-glutamate. Catalyzes the first step in hexosamine metabolism, converting fructose-6P into glucosamine-6P using glutamine as a nitrogen source. The polypeptide is Glutamine--fructose-6-phosphate aminotransferase [isomerizing] (Methanosarcina mazei (strain ATCC BAA-159 / DSM 3647 / Goe1 / Go1 / JCM 11833 / OCM 88) (Methanosarcina frisia)).